The chain runs to 1481 residues: Cystic fibrosis transmembrane conductance regulator (1481 aa).

Topologically, residues 1–77 are cytoplasmic; it reads MQRSPLEKAS…KLINALRRCF (77 aa). The chain crosses the membrane as a helical span at residues 78-98; that stretch reads FWRFMFYGILLYLGEVTKAVQ. The ABC transmembrane type-1 1 domain occupies 81 to 365; it reads FMFYGILLYL…WAVQTWYDSL (285 aa). Residues 99 to 122 are Extracellular-facing; the sequence is PLLLGRIIASYDPDNKEERSIAIY. Residues 123–146 traverse the membrane as a helical segment; it reads LGIGLCLLFIVRTLLLHPAIFGLH. Over 147 to 195 the chain is Cytoplasmic; it reads HIGMQMRIAMFSLIYKKTLKLSSRVLDKISIGQLVSLLSNNLNKFDEGL. The chain crosses the membrane as a helical span at residues 196–216; it reads ALAHFVWIVPLQVALLMGLIW. The Extracellular segment spans residues 217–222; it reads ELLQAS. The chain crosses the membrane as a helical span at residues 223–243; sequence AFCGLGFLIVLALFQAGLGRM. Residues 244 to 298 lie on the Cytoplasmic side of the membrane; it reads MMKYRDQRAGKINERLVITSEMIENIQSVKAYCWEEAMEKMIENLRQTELKLTRK. The chain crosses the membrane as a helical span at residues 299-319; it reads AAYVRYFNSSAFFFSGFFVVF. Over 320 to 339 the chain is Extracellular; sequence LSVLPYALIKGIVLRKIFTT. Residues 340 to 358 form a helical membrane-spanning segment; sequence ISFCIVLRMAVTRQFPWAV. Over 359 to 858 the chain is Cytoplasmic; that stretch reads QTWYDSLGAI…YLRYITVHKS (500 aa). ATP contacts are provided by residues W401, S434, 458–465, and Q493; that span reads GSTGAGKT. Residues 423 to 646 enclose the ABC transporter 1 domain; the sequence is NDDDSLFFSN…RPDFSSKLMG (224 aa). A lipid anchor (S-palmitoyl cysteine) is attached at C524. S549 and S660 each carry phosphoserine. The interval 654-831 is disordered R region; it reads SAERRNSILT…EEINEEDLKE (178 aa). At S670 the chain carries Phosphoserine; by PKA. Position 686 is a phosphoserine (S686). Residue K688 forms a Glycyl lysine isopeptide (Lys-Gly) (interchain with G-Cter in ubiquitin) linkage. Phosphoserine occurs at positions 700 and 712. Phosphothreonine is present on T717. S737, S753, S768, S790, S795, and S813 each carry phosphoserine. The helical transmembrane segment at 859-879 threads the bilayer; sequence LIFVLIWCLVIFLAEVAASLV. An ABC transmembrane type-1 2 domain is found at 859-1155; that stretch reads LIFVLIWCLV…AVNSSIDVDS (297 aa). Residues 880-918 lie on the Extracellular side of the membrane; the sequence is VLWFLGNTPPQDKGNSTYSRNNSYAVIITRTSSYYVFYI. Residues N894 and N900 are each glycosylated (N-linked (GlcNAc...) asparagine). The discontinuously helical transmembrane segment at 919–939 threads the bilayer; the sequence is YVGVADTLLAMGFFRGLPLVH. At 940 to 990 the chain is on the cytoplasmic side; sequence TLITVSKILHHKMLHSVLQAPMSTLNTLKAGGILNRFSKDIAILDDLLPLT. A helical membrane pass occupies residues 991–1011; that stretch reads IFDFIQLLLIVIGAIAVVAVL. At 1012-1013 the chain is on the extracellular side; that stretch reads QP. Residues 1014–1034 traverse the membrane as a helical segment; it reads YIFVATVPVIVAFIMLRAYFL. The Cytoplasmic segment spans residues 1035-1095; sequence QTSQQLKQLE…TANWFLYLST (61 aa). A helical membrane pass occupies residues 1096 to 1116; that stretch reads LRWFQMRIEMIFVIFFIAVTF. Residues 1117–1130 are Extracellular-facing; the sequence is ISILTTGEGEGTVG. A helical transmembrane segment spans residues 1131 to 1151; that stretch reads IILTLAMNIMSTLQWAVNSSI. Over 1152–1481 the chain is Cytoplasmic; sequence DVDSLMRSVS…TEEEVQDTRL (330 aa). In terms of domain architecture, ABC transporter 2 spans 1211–1444; that stretch reads MTVKDLTAKY…RSLFRQAISP (234 aa). ATP-binding positions include Y1220 and 1245–1252; that span reads GRTGSGKS. The segment at 1387 to 1481 is interaction with GORASP2; that stretch reads RTLKQAFADC…TEEEVQDTRL (95 aa). A lipid anchor (S-palmitoyl cysteine) is attached at C1396. A phosphoserine mark is found at S1445 and S1457. The PDZ-binding signature appears at 1479-1481; the sequence is TRL.

It belongs to the ABC transporter superfamily. ABCC family. CFTR transporter (TC 3.A.1.202) subfamily. In terms of assembly, monomer; does not require oligomerization for channel activity. May form oligomers in the membrane. Interacts with SLC26A3, SLC26A6 and NHERF1. Interacts with SHANK2. Interacts with MYO6. Interacts (via C-terminus) with GOPC (via PDZ domain); this promotes CFTR internalization and thereby decreases channel activity. Interacts with SLC4A7 through NHERF1. Found in a complex with MYO5B and RAB11A. Interacts with ANO1. Interacts with SLC26A8. Interacts with AHCYL1; the interaction increases CFTR activity. Interacts with CSE1L. The core-glycosylated form interacts with GORASP2 (via PDZ GRASP-type 1 domain) in respone to ER stress. Interacts with MARCHF2; the interaction leads to CFTR ubiqtuitination and degradation. Interacts with ADGRG2. Post-translationally, N-glycosylated. In terms of processing, phosphorylated; cAMP treatment promotes phosphorylation and activates the channel. Dephosphorylation decreases the ATPase activity (in vitro). Phosphorylation at PKA sites activates the channel. Phosphorylation at PKC sites enhances the response to phosphorylation by PKA. Phosphorylated by AMPK; this inhibits channel activity. Ubiquitinated, leading to its degradation in the lysosome. Deubiquitination by USP10 in early endosomes enhances its endocytic recycling to the cell membrane. Ubiquitinated by RNF185 during ER stress. Ubiquitinated by MARCHF2.

The protein resides in the apical cell membrane. The protein localises to the early endosome membrane. Its subcellular location is the cell membrane. It localises to the recycling endosome membrane. It is found in the endoplasmic reticulum membrane. The protein resides in the nucleus. It carries out the reaction ATP + H2O + closed Cl(-) channel = ADP + phosphate + open Cl(-) channel.. It catalyses the reaction chloride(in) = chloride(out). The catalysed reaction is hydrogencarbonate(in) = hydrogencarbonate(out). The enzyme catalyses ATP + H2O = ADP + phosphate + H(+). Its function is as follows. Epithelial ion channel that plays an important role in the regulation of epithelial ion and water transport and fluid homeostasis. Mediates the transport of chloride ions across the cell membrane. Possesses an intrinsic ATPase activity and utilizes ATP to gate its channel; the passive flow of anions through the channel is gated by cycles of ATP binding and hydrolysis by the ATP-binding domains. The ion channel is also permeable to HCO(3)(-); selectivity depends on the extracellular chloride concentration. Exerts its function also by modulating the activity of other ion channels and transporters. Contributes to the regulation of the pH and the ion content of the epithelial fluid layer. Modulates the activity of the epithelial sodium channel (ENaC) complex, in part by regulating the cell surface expression of the ENaC complex. May regulate bicarbonate secretion and salvage in epithelial cells by regulating the transporter SLC4A7. Can inhibit the chloride channel activity of ANO1. Plays a role in the chloride and bicarbonate homeostasis during sperm epididymal maturation and capacitation. The sequence is that of Cystic fibrosis transmembrane conductance regulator from Macaca fascicularis (Crab-eating macaque).